The sequence spans 139 residues: Holo-[acyl-carrier-protein] synthase (139 aa).

Mg(2+) is bound by residues D8 and E57.

Belongs to the P-Pant transferase superfamily. AcpS family. The cofactor is Mg(2+).

The protein localises to the cytoplasm. The enzyme catalyses apo-[ACP] + CoA = holo-[ACP] + adenosine 3',5'-bisphosphate + H(+). Its function is as follows. Transfers the 4'-phosphopantetheine moiety from coenzyme A to a Ser of acyl-carrier-protein. The sequence is that of Holo-[acyl-carrier-protein] synthase from Rhizobium meliloti (strain 1021) (Ensifer meliloti).